The sequence spans 291 residues: Diaminopimelate epimerase (291 aa).

Substrate contacts are provided by N13, Q46, and N66. The active-site Proton donor is C75. Residues 76 to 77, N170, N203, and 221 to 222 each bind substrate; these read GN and ER. Residue C230 is the Proton acceptor of the active site. 231 to 232 lines the substrate pocket; the sequence is GS.

Belongs to the diaminopimelate epimerase family. In terms of assembly, homodimer.

It localises to the cytoplasm. It catalyses the reaction (2S,6S)-2,6-diaminopimelate = meso-2,6-diaminopimelate. Its pathway is amino-acid biosynthesis; L-lysine biosynthesis via DAP pathway; DL-2,6-diaminopimelate from LL-2,6-diaminopimelate: step 1/1. Catalyzes the stereoinversion of LL-2,6-diaminopimelate (L,L-DAP) to meso-diaminopimelate (meso-DAP), a precursor of L-lysine and an essential component of the bacterial peptidoglycan. This chain is Diaminopimelate epimerase, found in Albidiferax ferrireducens (strain ATCC BAA-621 / DSM 15236 / T118) (Rhodoferax ferrireducens).